A 674-amino-acid chain; its full sequence is Probable 3',5'-cyclic-AMP phosphodiesterase pde-4 (674 aa).

The disordered stretch occupies residues 1–82; the sequence is MPRRRGSSSS…TSSASSYHPP (82 aa). Over residues 15–24 the composition is skewed to gly residues; sequence GGSGGGGGFG. A compositionally biased stretch (low complexity) spans 39–62; it reads RTSSPSASSTSRTPPAALPPRTSA. Residues 66–78 show a composition bias toward polar residues; that stretch reads PGSNHKLTSSASS. Residues 328-660 enclose the PDEase domain; sequence HVPEYGVNCA…EWYQSRIPEE (333 aa). H407 acts as the Proton donor in catalysis. A divalent metal cation contacts are provided by H411, H447, D448, and D565.

It belongs to the cyclic nucleotide phosphodiesterase family. A divalent metal cation serves as cofactor. As to expression, expressed in dorsal D (DD) motor neurons and several other neurons at the L1 stage. Expression in DD neurons decreases gradually beginning in the late L1 stage. Highly expressed in adult ventral D (VD) motor neurons, but diminished in adult DD motor neurons.

It carries out the reaction 3',5'-cyclic AMP + H2O = AMP + H(+). Functionally, hydrolyzes the second messenger 3',5'-cyclic AMP (cAMP), which is a key regulator of many important physiological processes. Antagonizes dorsal D (DD) motor neuron respecification by reducing levels of cAMP. This Caenorhabditis elegans protein is Probable 3',5'-cyclic-AMP phosphodiesterase pde-4 (pde-4).